Here is a 141-residue protein sequence, read N- to C-terminus: Large ribosomal subunit protein uL11 (141 aa).

It belongs to the universal ribosomal protein uL11 family. In terms of assembly, part of the ribosomal stalk of the 50S ribosomal subunit. Interacts with L10 and the large rRNA to form the base of the stalk. L10 forms an elongated spine to which L12 dimers bind in a sequential fashion forming a multimeric L10(L12)X complex. One or more lysine residues are methylated.

Functionally, forms part of the ribosomal stalk which helps the ribosome interact with GTP-bound translation factors. This Nautilia profundicola (strain ATCC BAA-1463 / DSM 18972 / AmH) protein is Large ribosomal subunit protein uL11.